The following is a 478-amino-acid chain: uncharacterized protein (478 aa).

The RRM domain occupies 5–85 (KRIYVGGLSS…SKLRIEEARP (81 aa)). Residues Ser-207 and Ser-308 each carry the phosphoserine modification.

It localises to the nucleus. The protein localises to the nucleolus. This is an uncharacterized protein from Schizosaccharomyces pombe (strain 972 / ATCC 24843) (Fission yeast).